Consider the following 200-residue polypeptide: Probable GTP-binding protein EngB (200 aa).

Residues 23-197 (KNSEVVFIGR…RERVLKDVLG (175 aa)) enclose the EngB-type G domain. Residues 31–38 (GRSNVGKS), 58–62 (GKTQL), 83–86 (DLPG), 153–156 (TKMD), and 175–177 (FTA) each bind GTP. Mg(2+)-binding residues include Ser-38 and Thr-60.

Belongs to the TRAFAC class TrmE-Era-EngA-EngB-Septin-like GTPase superfamily. EngB GTPase family. It depends on Mg(2+) as a cofactor.

In terms of biological role, necessary for normal cell division and for the maintenance of normal septation. This is Probable GTP-binding protein EngB from Wolinella succinogenes (strain ATCC 29543 / DSM 1740 / CCUG 13145 / JCM 31913 / LMG 7466 / NCTC 11488 / FDC 602W) (Vibrio succinogenes).